An 813-amino-acid chain; its full sequence is DNA gyrase subunit A (813 aa).

In terms of domain architecture, Topo IIA-type catalytic spans 38 to 504 (LPDVRDGLKP…EIEYLDVEDF (467 aa)). The active-site O-(5'-phospho-DNA)-tyrosine intermediate is the tyrosine 126. The short motif at 531-537 (QNRGGKG) is the GyrA-box element.

This sequence belongs to the type II topoisomerase GyrA/ParC subunit family. Heterotetramer, composed of two GyrA and two GyrB chains. In the heterotetramer, GyrA contains the active site tyrosine that forms a transient covalent intermediate with DNA, while GyrB binds cofactors and catalyzes ATP hydrolysis.

It is found in the cytoplasm. The catalysed reaction is ATP-dependent breakage, passage and rejoining of double-stranded DNA.. Its function is as follows. A type II topoisomerase that negatively supercoils closed circular double-stranded (ds) DNA in an ATP-dependent manner to modulate DNA topology and maintain chromosomes in an underwound state. Negative supercoiling favors strand separation, and DNA replication, transcription, recombination and repair, all of which involve strand separation. Also able to catalyze the interconversion of other topological isomers of dsDNA rings, including catenanes and knotted rings. Type II topoisomerases break and join 2 DNA strands simultaneously in an ATP-dependent manner. In Treponema pallidum (strain Nichols), this protein is DNA gyrase subunit A.